Here is a 402-residue protein sequence, read N- to C-terminus: MASILSRLGSSRGQNSPLPPWAHSMLRSLGRSLGPLMASMAERNMRLFSGRAEPAQGEETFENWLSQVTGVLPDWHMPEEEKVRRLMRTLRGPAREVMRLLQAANPGLDVEDFLRAMKLVFGESESSVTAHSKFVNTVQEHGEKPSLYVIRLEVQLQNAIQAGVFAEREANQARLHQLLVGAEMSTDLRFRLKNLLRVYANEPERLPNFLELIRMIREEEEWEETFINPKRPRRAESVMERALSPMAFQSSPPIMISSIDCNVIEIDDSPDDSDEDVILVEPEDPPLPSSSASSFLGRAVSEDQVLVIESPNIFEIQAPSTSSGAGRKNNRGFGELRRARKRKHTIHCSHCGEEGHSKETCDNESDKGQVFENLIITLQELTHAEERARGAPGEPIGLSEPQ.

The segment at 1–20 (MASILSRLGSSRGQNSPLPP) is disordered. The CCHC-type zinc finger occupies 346-363 (IHCSHCGEEGHSKETCDN). The tract at residues 383–402 (HAEERARGAPGEPIGLSEPQ) is disordered.

It belongs to the ZCCHC12 family. As to quaternary structure, interacts with SMAD1 and CREB-binding protein (CBP). Forms a protein-DNA complex through its association with SMAD1. As to expression, in embryonic brains expression is restricted to the ventral region of the forebrain, including the septum, amygdala, caudal putamen, and in the basal-forebrain cholinergic neurons. In adults, expressed in the brain, and at low levels in the testis.

Its function is as follows. Transcriptional coactivator in the bone morphogenetic protein (BMP)-signaling pathway. It positively modulates BMP signaling by interacting with SMAD1 and associating with CBP in the transcription complex. It contributes to the BMP-induced enhancement of cholinergic-neuron-specific gene expression. The sequence is that of Zinc finger CCHC domain-containing protein 12 (Zcchc12) from Mus musculus (Mouse).